We begin with the raw amino-acid sequence, 155 residues long: Gastrin-releasing peptide (155 aa).

The N-terminal stretch at 1 to 31 (MEGVLLFWKYRALFFLVLCSLVLCKVHLSQA) is a signal peptide. Met60 is modified (methionine amide). Residues 128-155 (FSGAEDNNLKEMLDYLYQMMNMKENTSS) constitute a propeptide that is removed on maturation.

It belongs to the bombesin/neuromedin-B/ranatensin family. As to expression, brain and stomach. In the stomach GRP was localized, at the base of the gastric pits, to occasional cells whose distribution and appearance were consistent with that of gut neuroendocrine cells.

The protein resides in the secreted. It localises to the cytoplasmic vesicle. Its subcellular location is the secretory vesicle lumen. Its function is as follows. Stimulates the release of gastrin and other gastrointestinal hormones. This chain is Gastrin-releasing peptide (grp), found in Bombina orientalis (Oriental fire-bellied toad).